The chain runs to 388 residues: Chorismate synthase (388 aa).

The NADP(+) site is built by Arg-39 and Arg-45. FMN-binding positions include 130–132 (RSS), 251–252 (NA), Gly-296, 311–315 (KPIPT), and Arg-337.

The protein belongs to the chorismate synthase family. As to quaternary structure, homotetramer. The cofactor is FMNH2.

It catalyses the reaction 5-O-(1-carboxyvinyl)-3-phosphoshikimate = chorismate + phosphate. The protein operates within metabolic intermediate biosynthesis; chorismate biosynthesis; chorismate from D-erythrose 4-phosphate and phosphoenolpyruvate: step 7/7. Its function is as follows. Catalyzes the anti-1,4-elimination of the C-3 phosphate and the C-6 proR hydrogen from 5-enolpyruvylshikimate-3-phosphate (EPSP) to yield chorismate, which is the branch point compound that serves as the starting substrate for the three terminal pathways of aromatic amino acid biosynthesis. This reaction introduces a second double bond into the aromatic ring system. The sequence is that of Chorismate synthase from Streptococcus pyogenes serotype M28 (strain MGAS6180).